A 40-amino-acid chain; its full sequence is Subtilisin-like serine protease AS-E1 (40 aa).

One can recognise a Peptidase S8 domain in the interval 4–40; that stretch reads PWGLARISHRTTGATSYVYDDSAGEGTCSYIIDTGIY. D36 (charge relay system) is an active-site residue.

Belongs to the peptidase S8 family. In terms of assembly, homodimer.

Strongly inhibited by antipain and PMSF. Inhibited by benzamidine and aprotinin by 80% and 17% respectively. Little or no inhibition by EDTA, E-64, iodoacetic acid, leupeptin and FUT-175. Subtilisin-like serine protease. Cleaves prothrombin at 155-Arg-|-Ser-156, 45-Thr-|-Ala-46 and 316-Tyr-|-Ile-317 to produce meizothrombin(desF1)-like molecules. Degrades fibrinogen. Inhibits plasma coagulation. This is Subtilisin-like serine protease AS-E1 from Acremonium sp.